Here is a 401-residue protein sequence, read N- to C-terminus: 2,3,4,5-tetrahydropyridine-2,6-dicarboxylate N-succinyltransferase (401 aa).

E269 serves as the catalytic Acyl-anhydride intermediate. Succinyl-CoA contacts are provided by residues R271, G286, S289, A312, 327–328, G335, and K364; that span reads DA.

The protein belongs to the type 2 tetrahydrodipicolinate N-succinyltransferase family. As to quaternary structure, homotrimer.

The protein localises to the cytoplasm. It catalyses the reaction (S)-2,3,4,5-tetrahydrodipicolinate + succinyl-CoA + H2O = (S)-2-succinylamino-6-oxoheptanedioate + CoA. It participates in amino-acid biosynthesis; L-lysine biosynthesis via DAP pathway; LL-2,6-diaminopimelate from (S)-tetrahydrodipicolinate (succinylase route): step 1/3. Its function is as follows. Catalyzes the conversion of the cyclic tetrahydrodipicolinate (THDP) into the acyclic N-succinyl-L-2-amino-6-oxopimelate using succinyl-CoA. This is 2,3,4,5-tetrahydropyridine-2,6-dicarboxylate N-succinyltransferase from Helicobacter pylori (strain ATCC 700392 / 26695) (Campylobacter pylori).